A 65-amino-acid polypeptide reads, in one-letter code: LTCLICPEKYCNKVHTCLNGEKICFKRYSERKLLGKRYIRGCADTCPVRKPREIVQCCSTDKCNH.

5 disulfides stabilise this stretch: C3–C24, C6–C11, C17–C42, C46–C57, and C58–C63.

It belongs to the three-finger toxin family. Ancestral subfamily. Orphan group II sub-subfamily. In terms of tissue distribution, expressed by the venom gland.

Its subcellular location is the secreted. Binds with low affinity to muscular (alpha-1-beta-1-delta-epsilon/CHRNA1-CHRNB1-CHRND-CHRNE) and very low affinity to neuronal (alpha-7/CHRNA7) nicotinic acetylcholine receptor (nAChR). This is Weak neurotoxin 6 from Naja naja (Indian cobra).